Consider the following 572-residue polypeptide: Zyxin (572 aa).

An N-acetylalanine modification is found at Ala2. The tract at residues Gln23–Leu351 is disordered. Pro residues-rich tracts occupy residues Ile63–Leu78 and Phe93–Pro108. Phosphoserine is present on residues Ser116, Ser142, Ser143, Ser169, and Ser170. The span at Ser143–Asp156 shows a compositional bias: low complexity. Thr179 is subject to Phosphothreonine. The span at Ser202–Gln239 shows a compositional bias: low complexity. Residues Ser240–Pro252 are compositionally biased toward polar residues. Asymmetric dimethylarginine is present on Arg253. The span at Arg253–Lys265 shows a compositional bias: pro residues. The residue at position 259 (Ser259) is a Phosphoserine. Lys265 is subject to N6-acetyllysine. Phosphoserine is present on Ser267. At Thr270 the chain carries Phosphothreonine. N6-acetyllysine is present on Lys272. Thr274 is subject to Phosphothreonine. Lys279 carries the N6-acetyllysine modification. 3 positions are modified to phosphoserine: Ser281, Ser288, and Ser308. Residues Gly305–Gln318 are compositionally biased toward polar residues. The segment covering Gln319–His330 has biased composition (basic and acidic residues). At Ser344 the chain carries Phosphoserine. 3 consecutive LIM zinc-binding domains span residues Cys384–Lys443, Cys444–Arg503, and Cys504–Ala570.

This sequence belongs to the zyxin/ajuba family. Interacts with HPV type 6 protein E6. Does not interact significantly with E6 proteins from HPV types 11, 16, or 18. Interacts, via the Pro-rich regions, with the EVH1 domains of ENAH, EVL and VASP. Interacts with the first LIM domain of TES. Interacts with NEBL (isoform 2). Interacts with SYNPO2. In terms of assembly, (Microbial infection) Interacts with human papillomavirus type 6/HPV6 protein E6. Does not interact significantly with E6 proteins from HPV types 11, 16, or 18.

The protein localises to the cytoplasm. Its subcellular location is the cytoskeleton. It localises to the nucleus. It is found in the cell junction. The protein resides in the focal adhesion. Its function is as follows. Adhesion plaque protein. Binds alpha-actinin and the CRP protein. Important for targeting TES and ENA/VASP family members to focal adhesions and for the formation of actin-rich structures. May be a component of a signal transduction pathway that mediates adhesion-stimulated changes in gene expression. The sequence is that of Zyxin (ZYX) from Homo sapiens (Human).